The chain runs to 453 residues: Probable glycine dehydrogenase (decarboxylating) subunit 1 (453 aa).

Belongs to the GcvP family. N-terminal subunit subfamily. As to quaternary structure, the glycine cleavage system is composed of four proteins: P, T, L and H. In this organism, the P 'protein' is a heterodimer of two subunits.

It carries out the reaction N(6)-[(R)-lipoyl]-L-lysyl-[glycine-cleavage complex H protein] + glycine + H(+) = N(6)-[(R)-S(8)-aminomethyldihydrolipoyl]-L-lysyl-[glycine-cleavage complex H protein] + CO2. Functionally, the glycine cleavage system catalyzes the degradation of glycine. The P protein binds the alpha-amino group of glycine through its pyridoxal phosphate cofactor; CO(2) is released and the remaining methylamine moiety is then transferred to the lipoamide cofactor of the H protein. This is Probable glycine dehydrogenase (decarboxylating) subunit 1 from Dictyoglomus turgidum (strain DSM 6724 / Z-1310).